Here is a 115-residue protein sequence, read N- to C-terminus: MNSGVCLCVLMAVLAAGALTQPVPPADPAGSGLQRAEEAPRRQLRVSQRTDGESRAHLGALLARYIQQARKAPSGRMSIVKNLQNLDPSHRISDRDYMGWMDFGRRSAEEYEYPS.

The signal sequence occupies residues 1–20; the sequence is MNSGVCLCVLMAVLAAGALT. A propeptide spanning residues 21–44 is cleaved from the precursor; the sequence is QPVPPADPAGSGLQRAEEAPRRQL. The interval 23–52 is disordered; sequence VPPADPAGSGLQRAEEAPRRQLRVSQRTDG. Ser31 is a glycosylation site (O-linked (Xyl...) (chondroitin sulfate) serine). Tyr97 is modified (sulfotyrosine). Residue Phe103 is modified to Phenylalanine amide. Residues 107–115 constitute a propeptide that is removed on maturation; that stretch reads SAEEYEYPS. Tyr111 and Tyr113 each carry sulfotyrosine.

The protein belongs to the gastrin/cholecystokinin family. In terms of assembly, binds to CCK-A receptors in the pancreas and CCK-B receptors in the brain. Post-translationally, the precursor is cleaved by proteases to produce a number of active cholecystokinins. The precursor is cleaved by ACE, which removes the Gly-Arg-Arg peptide at the C-terminus, leading to mature hormone. Detected in cerebrospinal fluid and urine (at protein level).

It localises to the secreted. In terms of biological role, this peptide hormone induces gall bladder contraction and the release of pancreatic enzymes in the gut. Its function in the brain is not clear. Binding to CCK-A receptors stimulates amylase release from the pancreas, binding to CCK-B receptors stimulates gastric acid secretion. In Homo sapiens (Human), this protein is Cholecystokinin (CCK).